A 254-amino-acid chain; its full sequence is Putative hydro-lyase SACE_1553 (254 aa).

This sequence belongs to the D-glutamate cyclase family.

This is Putative hydro-lyase SACE_1553 from Saccharopolyspora erythraea (strain ATCC 11635 / DSM 40517 / JCM 4748 / NBRC 13426 / NCIMB 8594 / NRRL 2338).